Here is a 585-residue protein sequence, read N- to C-terminus: Potassium-transporting ATPase potassium-binding subunit (585 aa).

Transmembrane regions (helical) follow at residues 25 to 45 (IIIF…SFYI), 84 to 104 (YFIN…LVIM), 152 to 172 (FVIT…SMAF), 194 to 214 (IFDL…LAGV), 275 to 295 (LEFV…GIVF), 307 to 327 (VIMF…YVGV), 345 to 365 (AIGV…STGA), 368 to 388 (GALV…LLLN), 397 to 417 (GVLN…LMVG), 437 to 457 (LSLV…LMIP), 502 to 522 (LDGV…LVIA), and 547 to 567 (LLLI…IIVL).

The protein belongs to the KdpA family. The system is composed of three essential subunits: KdpA, KdpB and KdpC.

The protein localises to the cell membrane. In terms of biological role, part of the high-affinity ATP-driven potassium transport (or Kdp) system, which catalyzes the hydrolysis of ATP coupled with the electrogenic transport of potassium into the cytoplasm. This subunit binds the extracellular potassium ions and delivers the ions to the membrane domain of KdpB through an intramembrane tunnel. The sequence is that of Potassium-transporting ATPase potassium-binding subunit from Thermoplasma volcanium (strain ATCC 51530 / DSM 4299 / JCM 9571 / NBRC 15438 / GSS1).